A 246-amino-acid chain; its full sequence is Cell division protein ZapD (246 aa).

This sequence belongs to the ZapD family. In terms of assembly, interacts with FtsZ.

The protein localises to the cytoplasm. In terms of biological role, cell division factor that enhances FtsZ-ring assembly. Directly interacts with FtsZ and promotes bundling of FtsZ protofilaments, with a reduction in FtsZ GTPase activity. The protein is Cell division protein ZapD of Vibrio atlanticus (strain LGP32) (Vibrio splendidus (strain Mel32)).